The chain runs to 158 residues: Small ribosomal subunit protein uS7 (158 aa).

This sequence belongs to the universal ribosomal protein uS7 family. In terms of assembly, part of the 30S ribosomal subunit. Contacts proteins S9 and S11.

In terms of biological role, one of the primary rRNA binding proteins, it binds directly to 16S rRNA where it nucleates assembly of the head domain of the 30S subunit. Is located at the subunit interface close to the decoding center, probably blocks exit of the E-site tRNA. The chain is Small ribosomal subunit protein uS7 from Granulibacter bethesdensis (strain ATCC BAA-1260 / CGDNIH1).